The primary structure comprises 58 residues: Large ribosomal subunit protein uL30 (58 aa).

This sequence belongs to the universal ribosomal protein uL30 family. In terms of assembly, part of the 50S ribosomal subunit.

The polypeptide is Large ribosomal subunit protein uL30 (Wigglesworthia glossinidia brevipalpis).